The following is a 256-amino-acid chain: Acetyl-coenzyme A carboxylase carboxyl transferase subunit beta 2 (256 aa).

In terms of domain architecture, CoA carboxyltransferase N-terminal spans 1–256; sequence MTVKCNKCKE…LAIHAETVSA (256 aa). Zn(2+)-binding residues include Cys5, Cys8, Cys24, and Cys27. The C4-type zinc finger occupies 5–27; sequence CNKCKEEINKEDLEKNYYICPLC.

The protein belongs to the AccD/PCCB family. In terms of assembly, acetyl-CoA carboxylase is a heterohexamer composed of biotin carboxyl carrier protein (AccB), biotin carboxylase (AccC) and two subunits each of ACCase subunit alpha (AccA) and ACCase subunit beta (AccD). The cofactor is Zn(2+).

Its subcellular location is the cytoplasm. The enzyme catalyses N(6)-carboxybiotinyl-L-lysyl-[protein] + acetyl-CoA = N(6)-biotinyl-L-lysyl-[protein] + malonyl-CoA. It participates in lipid metabolism; malonyl-CoA biosynthesis; malonyl-CoA from acetyl-CoA: step 1/1. Component of the acetyl coenzyme A carboxylase (ACC) complex. Biotin carboxylase (BC) catalyzes the carboxylation of biotin on its carrier protein (BCCP) and then the CO(2) group is transferred by the transcarboxylase to acetyl-CoA to form malonyl-CoA. The sequence is that of Acetyl-coenzyme A carboxylase carboxyl transferase subunit beta 2 from Lachnospira eligens (strain ATCC 27750 / DSM 3376 / VPI C15-48 / C15-B4) (Eubacterium eligens).